The sequence spans 166 residues: Bacterial microcompartment shell protein EutK (166 aa).

Residues 4–88 (ALGLLEVDGM…PDDDTQWLVT (85 aa)) form the BMC domain. The EutK-Ctail domain maps to 109–165 (ESADELLALLTSVRQGMTAGEVAAHFGWPLEKARNALEQLFSAGTLRKRSSRYRLKP).

It belongs to the bacterial microcompartments protein family. In terms of assembly, monomeric in solution.

It is found in the bacterial microcompartment. It participates in amine and polyamine degradation; ethanolamine degradation. Its function is as follows. Probably a minor component of the bacterial microcompartment (BMC) shell dedicated to ethanolamine degradation. It might bind nucleic acids. This Escherichia coli (strain K12) protein is Bacterial microcompartment shell protein EutK (eutK).